The following is a 126-amino-acid chain: Small ribosomal subunit protein uS11 (126 aa).

This sequence belongs to the universal ribosomal protein uS11 family. In terms of assembly, part of the 30S ribosomal subunit. Interacts with proteins S7 and S18. Binds to IF-3.

Functionally, located on the platform of the 30S subunit, it bridges several disparate RNA helices of the 16S rRNA. Forms part of the Shine-Dalgarno cleft in the 70S ribosome. The sequence is that of Small ribosomal subunit protein uS11 from Desulfotalea psychrophila (strain LSv54 / DSM 12343).